A 365-amino-acid polypeptide reads, in one-letter code: Patr class I histocompatibility antigen, A-2 alpha chain (365 aa).

A signal peptide spans 1–24 (MAVMPPRTLLLLLSGALALTQTWA). Residues 25-114 (GSHSMRYFFT…LRGYYNQSED (90 aa)) are alpha-1. Residues 25–308 (GSHSMRYFFT…EPSSQPTIPI (284 aa)) are Extracellular-facing. The N-linked (GlcNAc...) asparagine glycan is linked to Asn110. The interval 115 to 206 (GSHTIQIMYG…ENGKETLQRT (92 aa)) is alpha-2. 2 cysteine pairs are disulfide-bonded: Cys125–Cys188 and Cys227–Cys283. The interval 207–298 (DPPKTHMTHH…GLPKPLTLRW (92 aa)) is alpha-3. The region spanning 209–295 (PKTHMTHHPI…QHEGLPKPLT (87 aa)) is the Ig-like C1-type domain. The interval 299–308 (EPSSQPTIPI) is connecting peptide. Residues 309 to 332 (VGIIAGLVLLGAVITGAVVAAVMW) form a helical membrane-spanning segment. Residues 333–365 (RRKSSDRKGGSYTQAASSDSAQGSDVSLTACKV) are Cytoplasmic-facing. Positions 339-360 (RKGGSYTQAASSDSAQGSDVSL) are disordered. Ser343 is modified (phosphoserine). A Phosphotyrosine modification is found at Tyr344. Residues 346–359 (QAASSDSAQGSDVS) are compositionally biased toward low complexity. Ser349, Ser350, Ser352, Ser356, and Ser359 each carry phosphoserine.

Belongs to the MHC class I family. Heterodimer of an alpha chain and a beta chain (beta-2-microglobulin).

It localises to the membrane. Functionally, involved in the presentation of foreign antigens to the immune system. The sequence is that of Patr class I histocompatibility antigen, A-2 alpha chain from Pan troglodytes (Chimpanzee).